Reading from the N-terminus, the 414-residue chain is L-cysteine:1D-myo-inositol 2-amino-2-deoxy-alpha-D-glucopyranoside ligase (414 aa).

The segment at 1-38 is disordered; it reads MRSWPAPEVPNLPEAGLPGPALPLHLHDTATGTVRPTR. Residues 11 to 38 show a composition bias toward low complexity; it reads NLPEAGLPGPALPLHLHDTATGTVRPTR. Cysteine 48 contributes to the Zn(2+) binding site. Residues 48-51, threonine 63, and 86-88 contribute to the L-cysteinyl-5'-AMP site; these read CGIT and NVT. The short motif at 50-60 is the 'HIGH' region element; sequence ITPYDATHLGH. The short motif at 188–193 is the 'ERGGDP' region element; sequence ERGGDP. Tryptophan 228 contributes to the L-cysteinyl-5'-AMP binding site. Residue cysteine 232 participates in Zn(2+) binding. 250-252 is a binding site for L-cysteinyl-5'-AMP; the sequence is GSD. Histidine 257 provides a ligand contact to Zn(2+). Valine 284 serves as a coordination point for L-cysteinyl-5'-AMP. A 'KMSKS' region motif is present at residues 290–294; the sequence is KMSKS.

It belongs to the class-I aminoacyl-tRNA synthetase family. MshC subfamily. Monomer. Requires Zn(2+) as cofactor.

It catalyses the reaction 1D-myo-inositol 2-amino-2-deoxy-alpha-D-glucopyranoside + L-cysteine + ATP = 1D-myo-inositol 2-(L-cysteinylamino)-2-deoxy-alpha-D-glucopyranoside + AMP + diphosphate + H(+). Catalyzes the ATP-dependent condensation of GlcN-Ins and L-cysteine to form L-Cys-GlcN-Ins. In Thermomonospora curvata (strain ATCC 19995 / DSM 43183 / JCM 3096 / KCTC 9072 / NBRC 15933 / NCIMB 10081 / Henssen B9), this protein is L-cysteine:1D-myo-inositol 2-amino-2-deoxy-alpha-D-glucopyranoside ligase.